Consider the following 699-residue polypeptide: UvrABC system protein B (699 aa).

Residues 35–188 (ERINNGEKDV…DHLLRKFVSM (154 aa)) form the Helicase ATP-binding domain. 48 to 55 (GATGTGKS) provides a ligand contact to ATP. The Beta-hairpin motif lies at 101–124 (YYDYYQPEAYVAQTDTFIEKDSSI). Positions 438–604 (QIDDLLGEIR…PLRKKIADIT (167 aa)) constitute a Helicase C-terminal domain. The UVR domain occupies 654–689 (VGLIEQLTEQMHGAAAELQFEVAARIRDEVKELKRE).

This sequence belongs to the UvrB family. As to quaternary structure, forms a heterotetramer with UvrA during the search for lesions. Interacts with UvrC in an incision complex.

It is found in the cytoplasm. Its function is as follows. The UvrABC repair system catalyzes the recognition and processing of DNA lesions. A damage recognition complex composed of 2 UvrA and 2 UvrB subunits scans DNA for abnormalities. Upon binding of the UvrA(2)B(2) complex to a putative damaged site, the DNA wraps around one UvrB monomer. DNA wrap is dependent on ATP binding by UvrB and probably causes local melting of the DNA helix, facilitating insertion of UvrB beta-hairpin between the DNA strands. Then UvrB probes one DNA strand for the presence of a lesion. If a lesion is found the UvrA subunits dissociate and the UvrB-DNA preincision complex is formed. This complex is subsequently bound by UvrC and the second UvrB is released. If no lesion is found, the DNA wraps around the other UvrB subunit that will check the other stand for damage. In Paenarthrobacter aurescens (strain TC1), this protein is UvrABC system protein B.